The chain runs to 330 residues: GTPase Obg (330 aa).

Residues 1 to 159 (MHFIDEVKIY…MWIHLSLKLL (159 aa)) enclose the Obg domain. The region spanning 160–327 (SDVGLVGLPN…IVKLALETIK (168 aa)) is the OBG-type G domain. GTP contacts are provided by residues 166–173 (GLPNAGKS), 191–195 (FTTLV), 212–215 (DIPG), 279–282 (NKCD), and 308–310 (STC). Residues serine 173 and threonine 193 each coordinate Mg(2+).

Belongs to the TRAFAC class OBG-HflX-like GTPase superfamily. OBG GTPase family. As to quaternary structure, monomer. Mg(2+) is required as a cofactor.

Its subcellular location is the cytoplasm. In terms of biological role, an essential GTPase which binds GTP, GDP and possibly (p)ppGpp with moderate affinity, with high nucleotide exchange rates and a fairly low GTP hydrolysis rate. Plays a role in control of the cell cycle, stress response, ribosome biogenesis and in those bacteria that undergo differentiation, in morphogenesis control. The protein is GTPase Obg of Rickettsia conorii (strain ATCC VR-613 / Malish 7).